Reading from the N-terminus, the 367-residue chain is Putrescine/agmatine-binding protein (367 aa).

Positions 1–19 (MKKVCALALSILTTIGATA) are cleaved as a signal peptide.

It belongs to the bacterial solute-binding protein 1 family.

Its subcellular location is the periplasm. In terms of biological role, binds putrescine and agmatine. This Pseudomonas aeruginosa (strain ATCC 15692 / DSM 22644 / CIP 104116 / JCM 14847 / LMG 12228 / 1C / PRS 101 / PAO1) protein is Putrescine/agmatine-binding protein.